The chain runs to 74 residues: Arabinogalactan protein 20 (74 aa).

A signal peptide spans 1-26 (MASRNSVAVIALFAFVFAVISPFAGA). Residue glutamine 27 is modified to Pyrrolidone carboxylic acid. Proline 31, proline 33, and proline 35 each carry 4-hydroxyproline. 3 O-linked (Ara...) hydroxyproline glycosylation sites follow: proline 31, proline 33, and proline 35. Serine 37 carries the GPI-anchor amidated serine lipid modification. The propeptide at 38–74 (DGTSIDQGIAYLLMVVALVLTYLIHPLDASSSSYTFF) is removed in mature form.

Belongs to the AG-peptide AGP family. In terms of processing, contains 4-hydroxyproline; hydroxylated on Pro-31, Pro-33 and Pro-35. Post-translationally, O-glycosylated on hydroxyprolines; noncontiguous hydroxylproline residues are glycosylated with arabinogalactan.

It localises to the cell membrane. Functionally, proteoglycan that seems to be implicated in diverse developmental roles such as differentiation, cell-cell recognition, embryogenesis and programmed cell death. This chain is Arabinogalactan protein 20, found in Arabidopsis thaliana (Mouse-ear cress).